We begin with the raw amino-acid sequence, 137 residues long: Holo-[acyl-carrier-protein] synthase (137 aa).

2 residues coordinate Mg(2+): Asp-8 and Glu-57.

The protein belongs to the P-Pant transferase superfamily. AcpS family. Requires Mg(2+) as cofactor.

It localises to the cytoplasm. The enzyme catalyses apo-[ACP] + CoA = holo-[ACP] + adenosine 3',5'-bisphosphate + H(+). Functionally, transfers the 4'-phosphopantetheine moiety from coenzyme A to a Ser of acyl-carrier-protein. The sequence is that of Holo-[acyl-carrier-protein] synthase from Hyphomonas neptunium (strain ATCC 15444).